The chain runs to 466 residues: Putative chitinase (466 aa).

Positions 1 to 17 (MYLTIWLVSILALGTWG) are cleaved as a signal peptide. The GH18 domain occupies 20–380 (FNRFCHYNSW…MAVIHGLNAY (361 aa)). Residues Cys24 and Cys49 are joined by a disulfide bond. Glu141 serves as the catalytic Proton donor. Residues 408–442 (NYRRRNQQEKVAEMEQRIRHLEQELQQSMGNMAYE) are a coiled coil.

Belongs to the glycosyl hydrolase 18 family. As to expression, prismatic layer of shell (at protein level). Expressed primarily in the mantle with highest level in the mantle edge and lower level in the mantle pallium.

Its subcellular location is the secreted. It catalyses the reaction Random endo-hydrolysis of N-acetyl-beta-D-glucosaminide (1-&gt;4)-beta-linkages in chitin and chitodextrins.. In Pinctada maxima (Silver-lipped pearl oyster), this protein is Putative chitinase.